The sequence spans 327 residues: MSVPGFWLEDGLPARALAPLAALYGAGVVLRRGLYQRGWLHRPASPVPVIVVGNLFVGGTGKTPLVAWLVTQLREYGWHPAIVARGYGGRAGKGPVAVTADSDPADSGDEPLLLARRCAVPVFVGSDRPATVQAAYQAGCDVVVSDDGLQHYRMRRDAEIVVLDAHRRLGNRRLLPAGPLREPIGRLAGVDIVAVNGDAVPEGDCVFHLQPGAPRAVDGSQRPWPGGEAHAVAGIGHPERFFASLQEVGIGVAERHVFPDHHAYSSQDLSFADERPIIMTEKDAVKCRDLPQADRLWYLPVELEPGCELTAAVSGLLTRLHAREGRV.

Position 56 to 63 (56 to 63 (FVGGTGKT)) interacts with ATP.

This sequence belongs to the LpxK family.

It carries out the reaction a lipid A disaccharide + ATP = a lipid IVA + ADP + H(+). It participates in glycolipid biosynthesis; lipid IV(A) biosynthesis; lipid IV(A) from (3R)-3-hydroxytetradecanoyl-[acyl-carrier-protein] and UDP-N-acetyl-alpha-D-glucosamine: step 6/6. In terms of biological role, transfers the gamma-phosphate of ATP to the 4'-position of a tetraacyldisaccharide 1-phosphate intermediate (termed DS-1-P) to form tetraacyldisaccharide 1,4'-bis-phosphate (lipid IVA). In Halorhodospira halophila (strain DSM 244 / SL1) (Ectothiorhodospira halophila (strain DSM 244 / SL1)), this protein is Tetraacyldisaccharide 4'-kinase.